The chain runs to 430 residues: Tol-Pal system protein TolB (430 aa).

An N-terminal signal peptide occupies residues 1–21; that stretch reads MKQALRVAFGFLMLWAAVLHA.

This sequence belongs to the TolB family. The Tol-Pal system is composed of five core proteins: the inner membrane proteins TolA, TolQ and TolR, the periplasmic protein TolB and the outer membrane protein Pal. They form a network linking the inner and outer membranes and the peptidoglycan layer.

The protein resides in the periplasm. Part of the Tol-Pal system, which plays a role in outer membrane invagination during cell division and is important for maintaining outer membrane integrity. TolB occupies a key intermediary position in the Tol-Pal system because it communicates directly with both membrane-embedded components, Pal in the outer membrane and TolA in the inner membrane. In Salmonella enteritidis PT4 (strain P125109), this protein is Tol-Pal system protein TolB.